The sequence spans 139 residues: Large ribosomal subunit protein bL17 (139 aa).

Belongs to the bacterial ribosomal protein bL17 family. In terms of assembly, part of the 50S ribosomal subunit. Contacts protein L32.

The chain is Large ribosomal subunit protein bL17 from Sphingopyxis alaskensis (strain DSM 13593 / LMG 18877 / RB2256) (Sphingomonas alaskensis).